The following is a 142-amino-acid chain: Large ribosomal subunit protein uL16 (142 aa).

The protein belongs to the universal ribosomal protein uL16 family. In terms of assembly, part of the 50S ribosomal subunit.

In terms of biological role, binds 23S rRNA and is also seen to make contacts with the A and possibly P site tRNAs. This Thermosipho melanesiensis (strain DSM 12029 / CIP 104789 / BI429) protein is Large ribosomal subunit protein uL16.